The chain runs to 362 residues: PDZ and LIM domain protein 3 (362 aa).

Residues 1 to 84 form the PDZ domain; that stretch reads MPQNVVLPGP…QLCLKIDRAE (84 aa). Phosphoserine occurs at positions 18, 92, and 263. Residues 261–282 are disordered; that stretch reads DGSDDRPAGTRSVRPVTKVHGG. The region spanning 290–349 is the LIM zinc-binding domain; the sequence is PLCDKCGSGIVGAVVKARDKYRHPECFVCADCNLNLKQKGYFFVEGELYCEMHARARTRP.

As to quaternary structure, interacts with ACTN2. Forms a heterodimer with PDLIM4 (via LIM domain). Highly expressed in skeletal muscle and at low levels in the heart.

Its subcellular location is the cytoplasm. It is found in the myofibril. It localises to the sarcomere. The protein resides in the z line. Its function is as follows. May play a role in the organization of actin filament arrays within muscle cells. In Rattus norvegicus (Rat), this protein is PDZ and LIM domain protein 3 (Pdlim3).